The sequence spans 401 residues: Argininosuccinate synthase (401 aa).

ATP contacts are provided by residues 11 to 19 (AYSGGLDTS) and alanine 38. The L-citrulline site is built by tyrosine 89 and serine 94. ATP is bound at residue glycine 119. L-aspartate contacts are provided by threonine 121, asparagine 125, and aspartate 126. Residue asparagine 125 participates in L-citrulline binding. Positions 129, 177, 186, 262, and 274 each coordinate L-citrulline.

Belongs to the argininosuccinate synthase family. Type 1 subfamily. As to quaternary structure, homotetramer.

The protein localises to the cytoplasm. The catalysed reaction is L-citrulline + L-aspartate + ATP = 2-(N(omega)-L-arginino)succinate + AMP + diphosphate + H(+). The protein operates within amino-acid biosynthesis; L-arginine biosynthesis; L-arginine from L-ornithine and carbamoyl phosphate: step 2/3. This Nitratidesulfovibrio vulgaris (strain DSM 19637 / Miyazaki F) (Desulfovibrio vulgaris) protein is Argininosuccinate synthase.